Here is a 453-residue protein sequence, read N- to C-terminus: Gamma-aminobutyric acid receptor subunit alpha-6 (453 aa).

Positions 1 to 19 (MVLLLPWLFIILWLENAQA) are cleaved as a signal peptide. Over 20-243 (QLEDEGNFYS…FHLQRKMGYF (224 aa)) the chain is Extracellular. N-linked (GlcNAc...) asparagine glycosylation is present at asparagine 31. Arginine 84 contacts 4-aminobutanoate. Residues asparagine 128 and asparagine 141 are each glycosylated (N-linked (GlcNAc...) asparagine). Threonine 147 is a binding site for 4-aminobutanoate. Cysteine 156 and cysteine 170 are joined by a disulfide. A helical transmembrane segment spans residues 244-264 (MIQIYTPCIMTVILSQVSFWI). Over 265–270 (NKESVP) the chain is Cytoplasmic. Residues 271–290 (ARTVFGITTVLTMTTLSISA) form a helical membrane-spanning segment. Residues 291–304 (RHSLPKVSYATAMD) lie on the Extracellular side of the membrane. The chain crosses the membrane as a helical span at residues 305-325 (WFIAVCFAFVFSALIEFAAVN). At 326–422 (YFTNLQSQKA…GTSKIDQYSR (97 aa)) the chain is on the cytoplasmic side. Phosphoserine is present on serine 375. A helical transmembrane segment spans residues 423–443 (ILFPVAFAGFNLVYWIVYLSK). Residues 444–453 (DTMEVSSTVE) lie on the Extracellular side of the membrane.

Belongs to the ligand-gated ion channel (TC 1.A.9) family. Gamma-aminobutyric acid receptor (TC 1.A.9.5) subfamily. GABRA6 sub-subfamily. As to quaternary structure, heteropentamer, formed by a combination of alpha (GABRA1-6), beta (GABRB1-3), gamma (GABRG1-3), delta (GABRD), epsilon (GABRE), rho (GABRR1-3), pi (GABRP) and theta (GABRQ) chains, each subunit exhibiting distinct physiological and pharmacological properties. Binds UBQLN1. As to expression, expressed in brain, in cerebellar granule cells.

Its subcellular location is the postsynaptic cell membrane. The protein resides in the cell membrane. The catalysed reaction is chloride(in) = chloride(out). In terms of biological role, alpha subunit of the heteropentameric ligand-gated chloride channel gated by gamma-aminobutyric acid (GABA), a major inhibitory neurotransmitter in the brain. GABA-gated chloride channels, also named GABA(A) receptors (GABAAR), consist of five subunits arranged around a central pore and contain GABA active binding site(s) located at the alpha and beta subunit interface(s). When activated by GABA, GABAARs selectively allow the flow of chloride anions across the cell membrane down their electrochemical gradient. Alpha-6/GABRA6 subunits are found at both synaptic and extrasynaptic sites. Chloride influx into the postsynaptic neuron following GABAAR opening decreases the neuron ability to generate a new action potential, thereby reducing nerve transmission. Extrasynaptic alpha-6-containing receptors contribute to the tonic GABAergic inhibition. Alpha-6 subunits are also present on glutamatergic synapses. The polypeptide is Gamma-aminobutyric acid receptor subunit alpha-6 (Mus musculus (Mouse)).